Reading from the N-terminus, the 445-residue chain is 6-phosphogluconate dehydrogenase, decarboxylating (445 aa).

Residues 1–4, 22–24, 63–65, and asparagine 91 each bind NADP(+); these read AVMG, NRS, and VKA. Residues asparagine 91 and 117 to 119 each bind substrate; that span reads SGG. The active-site Proton acceptor is the lysine 172. 175–176 lines the substrate pocket; it reads HN. Glutamate 179 serves as the catalytic Proton donor. Residues tyrosine 180, lysine 249, arginine 276, arginine 434, and histidine 440 each coordinate substrate.

The protein belongs to the 6-phosphogluconate dehydrogenase family. In terms of assembly, homodimer.

The catalysed reaction is 6-phospho-D-gluconate + NADP(+) = D-ribulose 5-phosphate + CO2 + NADPH. The protein operates within carbohydrate degradation; pentose phosphate pathway; D-ribulose 5-phosphate from D-glucose 6-phosphate (oxidative stage): step 3/3. Catalyzes the oxidative decarboxylation of 6-phosphogluconate to ribulose 5-phosphate and CO(2), with concomitant reduction of NADP to NADPH. The sequence is that of 6-phosphogluconate dehydrogenase, decarboxylating (gnd) from Raoultella planticola (Klebsiella planticola).